A 668-amino-acid polypeptide reads, in one-letter code: Probable ATP-dependent RNA helicase ddx52 (668 aa).

The tract at residues 37-174 (KQTKTNNKVH…TQEDKHKREI (138 aa)) is disordered. Residues 40 to 57 (KTNNKVHFFKNTTPSTPV) show a composition bias toward polar residues. Over residues 59–69 (SKKDNIKQKKE) the composition is skewed to basic and acidic residues. A compositionally biased stretch (acidic residues) spans 70–108 (EEEDNDNDNEESKEDDDFVEDDDNDDDDDDDDEDEENEE). Positions 109–120 (PKEKEFIKHQVN) are enriched in basic and acidic residues. Residues 138–147 (ENSDDSDDSD) are compositionally biased toward acidic residues. Over residues 161-174 (VSKETQEDKHKREI) the composition is skewed to basic and acidic residues. The Q motif motif lies at 199–227 (QLENRFKVRKYLLNNINEIGYKEPSPIQM). Residues 230 to 402 (IPILLKEREV…HSIMKNPIKI (173 aa)) form the Helicase ATP-binding domain. ATP is bound at residue 243–250 (APTGSGKT). Positions 349–352 (DEAD) match the DEAD box motif. The Helicase C-terminal domain occupies 413–574 (TVDQKLIYVG…HVPDWMLNLK (162 aa)). A disordered region spans residues 601–668 (RTSSKFKLRK…KQIKKPKKII (68 aa)). Positions 604 to 613 (SKFKLRKNKK) are enriched in basic residues. The segment covering 624–636 (SNENNNNNNNNNN) has biased composition (low complexity). A compositionally biased stretch (basic residues) spans 659–668 (KQIKKPKKII).

Belongs to the DEAD box helicase family. DDX52/ROK1 subfamily.

The protein localises to the nucleus. The protein resides in the nucleolus. It catalyses the reaction ATP + H2O = ADP + phosphate + H(+). ATP-binding RNA helicase which may be involved in the ribosome biogenesis. The chain is Probable ATP-dependent RNA helicase ddx52 (ddx52) from Dictyostelium discoideum (Social amoeba).